A 411-amino-acid chain; its full sequence is Adenylosuccinate synthetase (411 aa).

GTP is bound by residues 11–17 (GDEGKGK) and 39–41 (GHT). Asp12 acts as the Proton acceptor in catalysis. Residues Asp12 and Gly39 each contribute to the Mg(2+) site. Residues 12 to 15 (DEGK), 37 to 40 (NAGH), Thr121, Arg135, Gln215, Thr230, and Arg294 contribute to the IMP site. His40 (proton donor) is an active-site residue. 290-296 (TTTKRPR) serves as a coordination point for substrate. Residues Arg296, 322 to 324 (KLD), and 400 to 402 (STS) contribute to the GTP site.

Belongs to the adenylosuccinate synthetase family. In terms of assembly, homodimer. It depends on Mg(2+) as a cofactor.

It localises to the cytoplasm. It catalyses the reaction IMP + L-aspartate + GTP = N(6)-(1,2-dicarboxyethyl)-AMP + GDP + phosphate + 2 H(+). It participates in purine metabolism; AMP biosynthesis via de novo pathway; AMP from IMP: step 1/2. In terms of biological role, plays an important role in the de novo pathway of purine nucleotide biosynthesis. Catalyzes the first committed step in the biosynthesis of AMP from IMP. This is Adenylosuccinate synthetase from Helicobacter pylori (strain HPAG1).